Consider the following 1088-residue polypeptide: RNA-directed RNA polymerase (1088 aa).

The RdRp catalytic domain maps to 501–687; the sequence is LSYGDVTRFL…AKRYIAGGKI (187 aa).

This sequence belongs to the reoviridae RNA-directed RNA polymerase family. As to quaternary structure, interacts with VP3 (Potential). Interacts with VP2; this interaction activates VP1. Interacts with NSP5; this interaction is probably necessary for the formation of functional virus factories. Interacts with NSP2; this interaction is weak. It depends on Mg(2+) as a cofactor.

The protein localises to the virion. The catalysed reaction is RNA(n) + a ribonucleoside 5'-triphosphate = RNA(n+1) + diphosphate. Functionally, RNA-directed RNA polymerase that is involved in both transcription and genome replication. Together with VP3 capping enzyme, forms an enzyme complex positioned near the channels situated at each of the five-fold vertices of the core. Following infection, the outermost layer of the virus is lost, leaving a double-layered particle (DLP) made up of the core and VP6 shell. VP1 then catalyzes the transcription of fully conservative plus-strand genomic RNAs that are extruded through the DLP's channels into the cytoplasm where they function as mRNAs for translation of viral proteins. One copy of each of the viral (+)RNAs is also recruited during core assembly, together with newly synthesized polymerase complexes and VP2. The polymerase of these novo-formed particles catalyzes the synthesis of complementary minus-strands leading to dsRNA formation. To do so, the polymerase specifically recognizes and binds 4 bases 5'-UGUG-3' in the conserved 3'-sequence of plus-strand RNA templates. VP2 presumably activates the autoinhibited VP1-RNA complex to coordinate packaging and genome replication. Once dsRNA synthesis is complete, the polymerase switches to the transcriptional mode, thus providing secondary transcription. The sequence is that of RNA-directed RNA polymerase from Macaca mulatta (Rhesus macaque).